The following is a 504-amino-acid chain: MSFSVDVLANIAIELQRGIGHQDRFQRLITTLRQVLECDASALLRYDSRQFIPLAIDGLAKDVLGRRFALEGHPRLEAIARAGDVVRFPADSELPDPYDGLIPGQESLKVHACVGLPLFAGQNLIGALTLDGMQPDQFDVFSDEELRLIAALAAGALSNALLIEQLESQNMLPGDATPFEAVKQTQMIGLSPGMTQLKKEIEIVAASDLNVLISGETGTGKELVAKAIHEASPRAVNPLVYLNCAALPESVAESELFGHVKGAFTGAISNRSGKFEMADNGTLFLDEIGELSLALQAKLLRVLQYGDIQRVGDDRCLRVDVRVLAATNRDLREEVLAGRFRADLFHRLSVFPLSVPPLRERGDDVILLAGYFCEQCRLRQGLSRVVLSAGARNLLQHYSFPGNVRELEHAIHRAVVLARATRSGDEVILEAQHFAFPEVTLPTPEVAAVPVVKQNLREATEAFQRETIRQALAQNHHNWAACARMLETDVANLHRLAKRLGLKD.

The residue at position 57 (aspartate 57) is a 4-aspartylphosphate. The 230-residue stretch at 187–416 (MIGLSPGMTQ…LEHAIHRAVV (230 aa)) folds into the Sigma-54 factor interaction domain. Residues 215-222 (GETGTGKE) and 278-287 (ADNGTLFLDE) contribute to the ATP site. Positions 479 to 498 (WAACARMLETDVANLHRLAK) form a DNA-binding region, H-T-H motif.

Its pathway is nitrogen metabolism; nitric oxide reduction. In terms of biological role, required for the expression of anaerobic nitric oxide (NO) reductase, acts as a transcriptional activator for at least the norVW operon. Activation also requires sigma-54. This Escherichia coli (strain K12 / MC4100 / BW2952) protein is Anaerobic nitric oxide reductase transcription regulator NorR.